Here is a 57-residue protein sequence, read N- to C-terminus: MSQMSIFRKADVLSQTMTATIDVGRIENKETYEYYLKSHGFEVTKETDTIWAVKATQ.

This is an uncharacterized protein from His1 virus (isolate Australia/Victoria) (His1V).